Here is a 461-residue protein sequence, read N- to C-terminus: CBL-interacting protein kinase 5 (461 aa).

In terms of domain architecture, Protein kinase spans 12–266 (YELGRMLGQG…VEKLVEHPWF (255 aa)). ATP contacts are provided by residues 18–26 (LGQGTFAKV) and K41. D134 functions as the Proton acceptor in the catalytic mechanism. The tract at residues 152-181 (DFGLSAFKECQKQDGLLHTTCGTPAYVAPE) is activation loop. The region spanning 300–334 (EGKAKEPASSLKPVSLNAFDIISLSKGFDLSGLFE) is the NAF domain. The tract at residues 340–369 (KADSRFMTQKPASAIVSKLEQIAETESFKV) is PPI. The disordered stretch occupies residues 440-461 (HPSLAQSSTLTQSSKSISRHAI). Low complexity predominate over residues 442 to 455 (SLAQSSTLTQSSKS).

The protein belongs to the protein kinase superfamily. CAMK Ser/Thr protein kinase family. SNF1 subfamily. It depends on Mn(2+) as a cofactor.

It catalyses the reaction L-seryl-[protein] + ATP = O-phospho-L-seryl-[protein] + ADP + H(+). The catalysed reaction is L-threonyl-[protein] + ATP = O-phospho-L-threonyl-[protein] + ADP + H(+). In terms of biological role, CIPK serine-threonine protein kinases interact with CBL proteins. Binding of a CBL protein to the regulatory NAF domain of CIPK protein lead to the activation of the kinase in a calcium-dependent manner. The protein is CBL-interacting protein kinase 5 (CIPK5) of Oryza sativa subsp. japonica (Rice).